Reading from the N-terminus, the 117-residue chain is Circadian clock oscillator protein KaiB (117 aa).

Belongs to the KaiB family. In terms of assembly, may undergo a major conformational rearrangment; in the free state forms homooligomers. When bound to KaiC switches to a monomeric thioredoxin-fold (KaiB(fs)). The active oscillator complex is probably KaiC(6):KaiB(6).

Its function is as follows. Component of the KaiBC clock protein complex, which constitutes the main circadian regulator in cyanobacteria; it may modify the ATPase activity of KaiC. In terms of biological role, may be a metamorphic protein which reversibly switches between an inactive tetrameric fold and a rare, thioredoxin-like monomeric fold (KaiB(fs)). KaiB(fs) binds phospho-KaiC, and perhaps clock output effectors. This is Circadian clock oscillator protein KaiB from Prochlorococcus marinus (strain SARG / CCMP1375 / SS120).